Consider the following 446-residue polypeptide: Ribulose bisphosphate carboxylase large chain (446 aa).

Positions 89 and 139 each coordinate substrate. Lys141 (proton acceptor) is an active-site residue. Lys143 serves as a coordination point for substrate. Residues Lys167, Asp169, and Glu170 each contribute to the Mg(2+) site. An N6-carboxylysine modification is found at Lys167. His260 (proton acceptor) is an active-site residue. Arg261, His293, and Ser345 together coordinate substrate.

It belongs to the RuBisCO large chain family. Type I subfamily. In terms of assembly, heterohexadecamer of 8 large chains and 8 small chains; disulfide-linked. The disulfide link is formed within the large subunit homodimers. It depends on Mg(2+) as a cofactor. In terms of processing, the disulfide bond which can form in the large chain dimeric partners within the hexadecamer appears to be associated with oxidative stress and protein turnover.

The protein resides in the plastid. It is found in the chloroplast. It carries out the reaction 2 (2R)-3-phosphoglycerate + 2 H(+) = D-ribulose 1,5-bisphosphate + CO2 + H2O. The enzyme catalyses D-ribulose 1,5-bisphosphate + O2 = 2-phosphoglycolate + (2R)-3-phosphoglycerate + 2 H(+). Its function is as follows. RuBisCO catalyzes two reactions: the carboxylation of D-ribulose 1,5-bisphosphate, the primary event in carbon dioxide fixation, as well as the oxidative fragmentation of the pentose substrate in the photorespiration process. Both reactions occur simultaneously and in competition at the same active site. The protein is Ribulose bisphosphate carboxylase large chain of Exacum affine (Persian violet).